Consider the following 204-residue polypeptide: uncharacterized protein (204 aa).

Positions 1-16 (MKYTFLAVLSAVTVLA) are cleaved as a signal peptide.

The protein resides in the secreted. This is an uncharacterized protein from Arthroderma benhamiae (strain ATCC MYA-4681 / CBS 112371) (Trichophyton mentagrophytes).